The sequence spans 3078 residues: Homeobox-like protein HDP1 (3078 aa).

10 disordered regions span residues 1–29, 59–164, 203–306, 949–980, 1323–1390, 1415–1445, 1939–2046, 2115–2216, 2599–2637, and 2959–3019; these read MKRGRRKVDGDGNCPSNGMASSQRNDNSN, LHNS…INDN, SKRK…NIGK, NAEIHESNSPNHNGDKNVDPSDNVTGTKQDEN, DEDS…KDRK, SSSNYEEGNSSSNEENNISTDKNISNTNNKN, KVND…QDKF, TNES…QYNY, AYMNDNNLSNNNNDNNNDYDNDNNNNNNYSYDNKNDDNI, and QQNN…NNGP. Polar residues predominate over residues 14 to 29; sequence CPSNGMASSQRNDNSN. A compositionally biased stretch (basic and acidic residues) spans 59-84; that stretch reads LHNSSSRESKDMKLSEEPRHINEKCI. Composition is skewed to low complexity over residues 85 to 94 and 114 to 127; these read NDNNKINNNN and NNNNNNNKSHTKNN. Polar residues-rich tracts occupy residues 128-137, 148-157, 209-229, 237-252, and 949-960; these read IFFQTNNPDT, KQENTSSSLH, NSNNTMPTKKYNNTHQDNNIT, TSSIYDNTCNKNNTVH, and NAEIHESNSPNH. Residues 1368–1380 are compositionally biased toward basic residues; sequence RKNKINRGSKGKH. Positions 1415–1433 are enriched in low complexity; it reads SSSNYEEGNSSSNEENNIS. Residues 1434–1445 are compositionally biased toward polar residues; sequence TDKNISNTNNKN. Residues 1939 to 1993 show a composition bias toward low complexity; the sequence is KVNDSNNSNDANEGNNANYSNDSSNTNNNTSSSTNNSNNNTSCSSQNTTTSSENN. Composition is skewed to basic and acidic residues over residues 2012-2021 and 2029-2046; these read KDTQKEKNNL and YEDRNKNDEKNINEQDKF. Polar residues predominate over residues 2115-2126; that stretch reads TNESIKTNSDQN. Residues 2139-2160 show a composition bias toward low complexity; sequence MNNDNYNSSYDNVHNDNDNNMV. Residues 2163–2177 are compositionally biased toward basic and acidic residues; the sequence is DSSRQDNMEKQKSGE. The segment covering 2192 to 2201 has biased composition (acidic residues); sequence NDNDNDDNND. 3 stretches are compositionally biased toward low complexity: residues 2202–2216, 2602–2630, and 2959–2989; these read NDNNNNNNMNNQYNY, NDNNLSNNNNDNNNDYDNDNNNNNNYSYD, and QQNNNNNNDNINNINNMNNNNDNNNNSQKNN. Polar residues predominate over residues 2990 to 3006; that stretch reads LSEVQVSNINTPSSYNI. The tract at residues 2991-3078 is DNA-binding; that stretch reads SEVQVSNINT…GKRRKNEDNK (88 aa).

Homodimer.

Its subcellular location is the nucleus. It is found in the chromosome. Its function is as follows. Transcriptional regulator which binds to the DNA motifs 5'-GTGCACAC-3' (motif A) and 5'-[GTA]TGTA[CT][GA]TAC-3' (motif B) of genes essential for early gametocyte development, including those critical for the expansion of the inner membrane complex (IMC). The chain is Homeobox-like protein HDP1 from Plasmodium falciparum (isolate NF54).